The primary structure comprises 79 residues: Dolichyl-diphosphooligosaccharide--protein glycosyltransferase subunit DAD1 (79 aa).

The Lumenal portion of the chain corresponds to 1–19 (AVATALIQVAYMGLVGSFP). A helical membrane pass occupies residues 20–40 (FNSFLSGVLSCIGTAVLAVCL). Residues 41–58 (RIQVNKDNKEFKDLPPER) lie on the Cytoplasmic side of the membrane. A helical transmembrane segment spans residues 59-79 (AFADFVLCNLVLHLVIMNFLG).

This sequence belongs to the DAD/OST2 family. As to quaternary structure, component of the oligosaccharyltransferase (OST) complex.

It localises to the endoplasmic reticulum membrane. Its pathway is protein modification; protein glycosylation. Subunit of the oligosaccharyl transferase (OST) complex that catalyzes the initial transfer of a defined glycan (Glc(3)Man(9)GlcNAc(2) in eukaryotes) from the lipid carrier dolichol-pyrophosphate to an asparagine residue within an Asn-X-Ser/Thr consensus motif in nascent polypeptide chains, the first step in protein N-glycosylation. N-glycosylation occurs cotranslationally and the complex associates with the Sec61 complex at the channel-forming translocon complex that mediates protein translocation across the endoplasmic reticulum (ER). All subunits are required for a maximal enzyme activity. The chain is Dolichyl-diphosphooligosaccharide--protein glycosyltransferase subunit DAD1 (DAD1) from Zea mays (Maize).